The following is a 120-amino-acid chain: Fumarate reductase subunit D (120 aa).

The next 3 membrane-spanning stretches (helical) occupy residues 25 to 45 (FAML…LGVI), 55 to 75 (VAGF…ISMP), and 100 to 120 (IACY…IFMI).

Belongs to the FrdD family. In terms of assembly, part of an enzyme complex containing four subunits: a flavoprotein (FrdA), an iron-sulfur protein (FrdB), and two hydrophobic anchor proteins (FrdC and FrdD).

The protein resides in the cell inner membrane. Functionally, anchors the catalytic components of the fumarate reductase complex to the cell membrane, binds quinones. The sequence is that of Fumarate reductase subunit D from Aliivibrio salmonicida (strain LFI1238) (Vibrio salmonicida (strain LFI1238)).